A 486-amino-acid polypeptide reads, in one-letter code: Cardiolipin synthase A (486 aa).

The next 2 helical transmembrane spans lie at 3-23 (TFYT…IAGV) and 38-58 (MAWL…YLSF). PLD phosphodiesterase domains lie at 219–246 (MDLR…VDPR) and 399–426 (KDGL…DMRS). Catalysis depends on residues His224, Lys226, Asp231, His404, Lys406, and Asp411.

The protein belongs to the phospholipase D family. Cardiolipin synthase subfamily. ClsA sub-subfamily.

The protein resides in the cell inner membrane. The catalysed reaction is 2 a 1,2-diacyl-sn-glycero-3-phospho-(1'-sn-glycerol) = a cardiolipin + glycerol. In terms of biological role, catalyzes the reversible phosphatidyl group transfer from one phosphatidylglycerol molecule to another to form cardiolipin (CL) (diphosphatidylglycerol) and glycerol. This Pectobacterium atrosepticum (strain SCRI 1043 / ATCC BAA-672) (Erwinia carotovora subsp. atroseptica) protein is Cardiolipin synthase A.